Consider the following 424-residue polypeptide: Microcin H47 secretion protein MchE (424 aa).

Residues 1–25 (MFRQDALENRKMKWQGRAILLPGIP) lie on the Cytoplasmic side of the membrane. The helical transmembrane segment at 26-46 (LWLIMLGSIVFITAFLMFIIV) threads the bilayer. Over 47-424 (GTYSRRVNVS…KHSATGPLND (378 aa)) the chain is Periplasmic.

It belongs to the membrane fusion protein (MFP) (TC 8.A.1) family.

It is found in the cell inner membrane. Its function is as follows. Probably involved, in conjunction with MchF, in the secretion of microcin H47. This is Microcin H47 secretion protein MchE (mchE) from Escherichia coli.